A 336-amino-acid polypeptide reads, in one-letter code: Holliday junction branch migration complex subunit RuvB (336 aa).

The segment at 1–182 (MKERIVNLET…FGMSFRMQFY (182 aa)) is large ATPase domain (RuvB-L). Residues leucine 21, arginine 22, glycine 63, lysine 66, threonine 67, serine 68, 129 to 131 (EDF), arginine 172, tyrosine 182, and arginine 219 each bind ATP. Threonine 67 is a binding site for Mg(2+). A small ATPAse domain (RuvB-S) region spans residues 183-253 (SPSELSLIIK…ITLHALNELG (71 aa)). The tract at residues 256 to 336 (ELGFDEADLA…IPTLNPQTLF (81 aa)) is head domain (RuvB-H). The DNA site is built by arginine 310 and arginine 315.

The protein belongs to the RuvB family. In terms of assembly, homohexamer. Forms an RuvA(8)-RuvB(12)-Holliday junction (HJ) complex. HJ DNA is sandwiched between 2 RuvA tetramers; dsDNA enters through RuvA and exits via RuvB. An RuvB hexamer assembles on each DNA strand where it exits the tetramer. Each RuvB hexamer is contacted by two RuvA subunits (via domain III) on 2 adjacent RuvB subunits; this complex drives branch migration. In the full resolvosome a probable DNA-RuvA(4)-RuvB(12)-RuvC(2) complex forms which resolves the HJ.

It is found in the cytoplasm. It carries out the reaction ATP + H2O = ADP + phosphate + H(+). In terms of biological role, the RuvA-RuvB-RuvC complex processes Holliday junction (HJ) DNA during genetic recombination and DNA repair, while the RuvA-RuvB complex plays an important role in the rescue of blocked DNA replication forks via replication fork reversal (RFR). RuvA specifically binds to HJ cruciform DNA, conferring on it an open structure. The RuvB hexamer acts as an ATP-dependent pump, pulling dsDNA into and through the RuvAB complex. RuvB forms 2 homohexamers on either side of HJ DNA bound by 1 or 2 RuvA tetramers; 4 subunits per hexamer contact DNA at a time. Coordinated motions by a converter formed by DNA-disengaged RuvB subunits stimulates ATP hydrolysis and nucleotide exchange. Immobilization of the converter enables RuvB to convert the ATP-contained energy into a lever motion, pulling 2 nucleotides of DNA out of the RuvA tetramer per ATP hydrolyzed, thus driving DNA branch migration. The RuvB motors rotate together with the DNA substrate, which together with the progressing nucleotide cycle form the mechanistic basis for DNA recombination by continuous HJ branch migration. Branch migration allows RuvC to scan DNA until it finds its consensus sequence, where it cleaves and resolves cruciform DNA. In Helicobacter pylori (strain P12), this protein is Holliday junction branch migration complex subunit RuvB.